A 292-amino-acid chain; its full sequence is NAD-dependent protein deacetylase sir-2.4 (292 aa).

Positions 31–292 constitute a Deacetylase sirtuin-type domain; it reads IEKLRTLYNH…DEVPIPLKIS (262 aa). NAD(+) is bound by residues 56 to 75 and 116 to 119; these read GAGVSTGSKLPDFRGKQGVW and QNVD. The active-site Proton acceptor is His-136. Residues Cys-144, Cys-147, Cys-163, and Cys-169 each coordinate Zn(2+). Residues 216–218, 242–244, and Val-260 each bind NAD(+); these read GTS and NYQ.

This sequence belongs to the sirtuin family. Class IV subfamily. The cofactor is Zn(2+).

It catalyses the reaction N(6)-acetyl-L-lysyl-[protein] + NAD(+) + H2O = 2''-O-acetyl-ADP-D-ribose + nicotinamide + L-lysyl-[protein]. In terms of biological role, NAD-dependent protein deacetylase. In Caenorhabditis elegans, this protein is NAD-dependent protein deacetylase sir-2.4 (sir-2.4).